The chain runs to 260 residues: Glutamate racemase (260 aa).

Residues 14 to 15 and 46 to 47 each bind substrate; these read DS and YG. Cys-77 acts as the Proton donor/acceptor in catalysis. 78–79 serves as a coordination point for substrate; that stretch reads NT. The active-site Proton donor/acceptor is Cys-188. 189–190 lines the substrate pocket; that stretch reads TH.

It belongs to the aspartate/glutamate racemases family.

The enzyme catalyses L-glutamate = D-glutamate. It participates in cell wall biogenesis; peptidoglycan biosynthesis. In terms of biological role, provides the (R)-glutamate required for cell wall biosynthesis. The sequence is that of Glutamate racemase from Clostridium perfringens (strain SM101 / Type A).